Reading from the N-terminus, the 467-residue chain is NALCN channel auxiliary factor 1 (467 aa).

The chain crosses the membrane as a helical span at residues 40–60; sequence LSLASLLFFTVLLSDHLWFCA. The tract at residues 121-161 is disordered; the sequence is MGESSPAAQAHRLLSASSSPTLPPSPGGGGGSKGNRGKNNR. N-linked (GlcNAc...) asparagine glycosylation is found at asparagine 160, asparagine 226, and asparagine 254. 7 disulfide bridges follow: cysteine 200–cysteine 270, cysteine 235–cysteine 322, cysteine 255–cysteine 270, cysteine 313–cysteine 350, cysteine 333–cysteine 386, cysteine 339–cysteine 385, and cysteine 343–cysteine 370. Over residues 390 to 408 the composition is skewed to basic and acidic residues; it reads SEEQTAPRPKGTVDRRDSC. The interval 390 to 409 is disordered; it reads SEEQTAPRPKGTVDRRDSCP. A helical transmembrane segment spans residues 426 to 446; the sequence is LKLCVLVLILLHTVLTASAAQ. An N-linked (GlcNAc...) asparagine glycan is attached at asparagine 462.

Belongs to the NALF family. As to quaternary structure, component of the NALCN channel complex. NALCN complex consists of NALCN and auxiliary subunits, UNC79, UNC80 and NACL1. These auxiliary subunits are essential for the NALCN channel function.

The protein resides in the cell membrane. In terms of biological role, auxillary component of the NALCN sodium channel complex, a channel that regulates the resting membrane potential and controls neuronal excitability. The polypeptide is NALCN channel auxiliary factor 1 (Mus musculus (Mouse)).